Consider the following 278-residue polypeptide: SLAM family member 8 (278 aa).

Positions 1 to 20 are cleaved as a signal peptide; the sequence is MWSLWSLLLFEALLPVVVVS. Topologically, residues 21–231 are extracellular; the sequence is VQVLSKVGDS…AASGKASYKD (211 aa). 2 N-linked (GlcNAc...) asparagine glycosylation sites follow: Asn83 and Asn154. One can recognise an Ig-like C2-type domain in the interval 126–213; that stretch reads PEVQVFTAAA…PVSWDMTTVT (88 aa). Cys150 and Cys199 are oxidised to a cystine. Residues 232–252 traverse the membrane as a helical segment; the sequence is VLLVVVPITLFLILAGLFGAW. The Cytoplasmic portion of the chain corresponds to 253–278; sequence HHGLCSGKKKDACTDGVLPETENALV.

The protein localises to the membrane. In terms of biological role, may play a role in B-lineage commitment and/or modulation of signaling through the B-cell receptor. In Mus musculus (Mouse), this protein is SLAM family member 8 (Slamf8).